The following is a 442-amino-acid chain: Serine--tRNA ligase (442 aa).

An L-serine-binding site is contributed by 249-251; that stretch reads TSE. 280-282 contacts ATP; it reads RSE. Glu-303 is an L-serine binding site. 367–370 lines the ATP pocket; sequence EISS. Ser-402 is an L-serine binding site.

It belongs to the class-II aminoacyl-tRNA synthetase family. Type-1 seryl-tRNA synthetase subfamily. In terms of assembly, homodimer. The tRNA molecule binds across the dimer.

It localises to the cytoplasm. The catalysed reaction is tRNA(Ser) + L-serine + ATP = L-seryl-tRNA(Ser) + AMP + diphosphate + H(+). The enzyme catalyses tRNA(Sec) + L-serine + ATP = L-seryl-tRNA(Sec) + AMP + diphosphate + H(+). It participates in aminoacyl-tRNA biosynthesis; selenocysteinyl-tRNA(Sec) biosynthesis; L-seryl-tRNA(Sec) from L-serine and tRNA(Sec): step 1/1. Its function is as follows. Catalyzes the attachment of serine to tRNA(Ser). Is also able to aminoacylate tRNA(Sec) with serine, to form the misacylated tRNA L-seryl-tRNA(Sec), which will be further converted into selenocysteinyl-tRNA(Sec). The protein is Serine--tRNA ligase of Acidovorax ebreus (strain TPSY) (Diaphorobacter sp. (strain TPSY)).